Consider the following 316-residue polypeptide: Methionyl-tRNA formyltransferase (316 aa).

112–115 (SLLP) contacts (6S)-5,6,7,8-tetrahydrofolate.

Belongs to the Fmt family.

The enzyme catalyses L-methionyl-tRNA(fMet) + (6R)-10-formyltetrahydrofolate = N-formyl-L-methionyl-tRNA(fMet) + (6S)-5,6,7,8-tetrahydrofolate + H(+). Its function is as follows. Attaches a formyl group to the free amino group of methionyl-tRNA(fMet). The formyl group appears to play a dual role in the initiator identity of N-formylmethionyl-tRNA by promoting its recognition by IF2 and preventing the misappropriation of this tRNA by the elongation apparatus. This Actinobacillus pleuropneumoniae serotype 7 (strain AP76) protein is Methionyl-tRNA formyltransferase.